A 361-amino-acid polypeptide reads, in one-letter code: KDEL-tailed cysteine endopeptidase CEP2 (361 aa).

The first 20 residues, 1–20 (MKKLLLIFLFSLVILQTACG), serve as a signal peptide directing secretion. A propeptide spans 21–127 (FDYDDKEIES…FMYDHENLSK (107 aa)) (activation peptide). Residues Asn75 and Asn124 are each glycosylated (N-linked (GlcNAc...) asparagine). 3 cysteine pairs are disulfide-bonded: Cys149–Cys191, Cys183–Cys224, and Cys282–Cys333. The active site involves Cys152. Catalysis depends on residues His288 and Asn308. Residues 358-361 (KDEL) carry the Prevents secretion from ER motif.

The protein belongs to the peptidase C1 family. As to expression, expressed in roots, stems, rosette and cauline leaves, flowers, buds and green siliques. Found in the tip of young primary leaves, in very young root tips and at later stages in all tissues of lateral root, including the vascular bundle. Not expressed in lateral root primordia, while directly emerging through the epidermis.

The protein localises to the endoplasmic reticulum. Its function is as follows. Involved in the final stage of developmental programmed cell death and in intercalation of new cells. Cleaves extensins, thus probably supporting the final cell collapse. In Arabidopsis thaliana (Mouse-ear cress), this protein is KDEL-tailed cysteine endopeptidase CEP2.